The following is a 240-amino-acid chain: L-isoleucine-4-hydroxylase (240 aa).

Fe cation is bound by residues histidine 159, aspartate 161, and histidine 212.

This sequence belongs to the iron/ascorbate-dependent oxidoreductase family. The cofactor is L-ascorbate. Fe(2+) is required as a cofactor.

The catalysed reaction is L-isoleucine + 2-oxoglutarate + O2 = (4S)-4-hydroxy-L-isoleucine + succinate + CO2. In terms of biological role, catalyzes the hydroxylation of L-isoleucine to produce (4S)-4-hydroxy-L-isoleucine. Can also catalyze the hydroxylation of L-leucine, L-norvaline, L-norleucine and L-allo-isoleucine, as well as the sulfoxidation of L-methionine, L-ethionine, S-methyl-L-cysteine, S-ethyl-L-cysteine, and S-allyl-L-cysteine. In Bacillus thuringiensis, this protein is L-isoleucine-4-hydroxylase.